The chain runs to 379 residues: Class V chitinase CHIT5b (379 aa).

A signal peptide spans 1 to 26; sequence MANILNLKHLLTLALILLALATKSST. In terms of domain architecture, GH18 spans 34–379; the sequence is RVKGIYWLEN…TQASKAWKLV (346 aa). N-linked (GlcNAc...) asparagine glycosylation is found at Asn-68, Asn-109, and Asn-128. Catalysis depends on Glu-147, which acts as the Proton donor. N-linked (GlcNAc...) asparagine glycans are attached at residues Asn-192, Asn-227, and Asn-241.

It belongs to the glycosyl hydrolase 18 family. Chitinase class V subfamily.

It carries out the reaction Random endo-hydrolysis of N-acetyl-beta-D-glucosaminide (1-&gt;4)-beta-linkages in chitin and chitodextrins.. It functions in the pathway glycan degradation; chitin degradation. In terms of biological role, possesses chitinase activity in vitro toward glycol chitin, carboxymethyl-chitin, colloidal chitin, and the chitin oligosaccharides (N-acetylglucosamine) (GlcNAc)6 and (GlcNAc)5. Hydrolyzes (GlcNAc)6 into (GlcNAc)4 and (GlcNAc)2, or two (GlcNAc)3 molecules. Has the capacity to reduce hyphal growth of the fungus Trichoderma viride in an agar-plate bioassay. This is Class V chitinase CHIT5b from Medicago truncatula (Barrel medic).